The following is a 281-amino-acid chain: Probable endonuclease 4 (281 aa).

Residues histidine 70, histidine 110, glutamate 146, aspartate 180, histidine 183, histidine 217, aspartate 230, histidine 232, and glutamate 262 each contribute to the Zn(2+) site.

The protein belongs to the AP endonuclease 2 family. The cofactor is Zn(2+).

It catalyses the reaction Endonucleolytic cleavage to 5'-phosphooligonucleotide end-products.. Functionally, endonuclease IV plays a role in DNA repair. It cleaves phosphodiester bonds at apurinic or apyrimidinic (AP) sites, generating a 3'-hydroxyl group and a 5'-terminal sugar phosphate. The chain is Probable endonuclease 4 from Nitratiruptor sp. (strain SB155-2).